The sequence spans 427 residues: GTPase Obg (427 aa).

Residues 1-158 (MFVDQVKIYV…RDVTLELKVL (158 aa)) enclose the Obg domain. Positions 159–329 (ADVGLVGFPS…LLFEVANLLE (171 aa)) constitute an OBG-type G domain. Residues 165-172 (GFPSVGKS), 190-194 (FTTIV), 212-215 (DLPG), 282-285 (NKMD), and 310-312 (SAV) contribute to the GTP site. Mg(2+) contacts are provided by Ser172 and Thr192. The region spanning 349 to 427 (YKFESESNFE…ILEYQFEFID (79 aa)) is the OCT domain.

It belongs to the TRAFAC class OBG-HflX-like GTPase superfamily. OBG GTPase family. In terms of assembly, monomer. It depends on Mg(2+) as a cofactor.

The protein localises to the cytoplasm. In terms of biological role, an essential GTPase which binds GTP, GDP and possibly (p)ppGpp with moderate affinity, with high nucleotide exchange rates and a fairly low GTP hydrolysis rate. Plays a role in control of the cell cycle, stress response, ribosome biogenesis and in those bacteria that undergo differentiation, in morphogenesis control. This chain is GTPase Obg, found in Bacillus mycoides (strain KBAB4) (Bacillus weihenstephanensis).